Here is a 274-residue protein sequence, read N- to C-terminus: Thiamine kinase (274 aa).

Belongs to the thiamine kinase family.

It carries out the reaction thiamine + ATP = thiamine phosphate + ADP + H(+). The protein operates within cofactor biosynthesis; thiamine diphosphate biosynthesis; thiamine phosphate from thiamine: step 1/1. Catalyzes the ATP-dependent phosphorylation of thiamine to thiamine phosphate. Is involved in thiamine salvage. The protein is Thiamine kinase of Salmonella paratyphi A (strain ATCC 9150 / SARB42).